A 242-amino-acid polypeptide reads, in one-letter code: Small ribosomal subunit protein uS2 (242 aa).

It belongs to the universal ribosomal protein uS2 family.

This Shewanella woodyi (strain ATCC 51908 / MS32) protein is Small ribosomal subunit protein uS2.